The primary structure comprises 369 residues: Glutamate 5-kinase (369 aa).

ATP is bound at residue lysine 9. Substrate-binding residues include serine 49, aspartate 136, and asparagine 148. Residues 168–169 and 210–216 each bind ATP; these read TD and TGGMLTK. Positions 275-355 constitute a PUA domain; that stretch reads QGSIWVDKGA…KGVLIYRDDW (81 aa).

The protein belongs to the glutamate 5-kinase family.

The protein localises to the cytoplasm. The catalysed reaction is L-glutamate + ATP = L-glutamyl 5-phosphate + ADP. Its pathway is amino-acid biosynthesis; L-proline biosynthesis; L-glutamate 5-semialdehyde from L-glutamate: step 1/2. Functionally, catalyzes the transfer of a phosphate group to glutamate to form L-glutamate 5-phosphate. This is Glutamate 5-kinase from Streptococcus pneumoniae (strain ATCC 700669 / Spain 23F-1).